Here is a 432-residue protein sequence, read N- to C-terminus: Adenylosuccinate synthetase (432 aa).

GTP is bound by residues G16–K22 and G44–M46. Catalysis depends on D17, which acts as the Proton acceptor. Mg(2+) contacts are provided by D17 and G44. Residues D17–K20, N42–H45, T132, R146, Q226, T241, and R305 contribute to the IMP site. The active-site Proton donor is H45. Residue L301–R307 coordinates substrate. Residues R307, L333–D335, and S415–G417 each bind GTP.

It belongs to the adenylosuccinate synthetase family. In terms of assembly, homodimer. Requires Mg(2+) as cofactor.

It localises to the cytoplasm. It carries out the reaction IMP + L-aspartate + GTP = N(6)-(1,2-dicarboxyethyl)-AMP + GDP + phosphate + 2 H(+). Its pathway is purine metabolism; AMP biosynthesis via de novo pathway; AMP from IMP: step 1/2. Plays an important role in the de novo pathway of purine nucleotide biosynthesis. Catalyzes the first committed step in the biosynthesis of AMP from IMP. This Mycoplasma mycoides subsp. mycoides SC (strain CCUG 32753 / NCTC 10114 / PG1) protein is Adenylosuccinate synthetase.